The primary structure comprises 878 residues: E3 ubiquitin-protein ligase SH3RF3 (878 aa).

Positions 19 to 40 are disordered; sequence RGEGEDRQGEQQRGAQARTEED. The segment at 52-93 adopts an RING-type zinc-finger fold; it reads CSVCLERLDTTAKVLPCQHTFCRRCLESIVCSRHELRCPECR. The interval 120 to 145 is disordered; the sequence is PRTGASPGSSPPARPGPGTFSALAGG. SH3 domains are found at residues 187 to 246 and 249 to 312; these read SQLP…CVRP and QALP…LNDS. The interaction with RAC1 stretch occupies residues 364–433; the sequence is RVDSKKNAKK…TVPTQDSSSA (70 aa). Ser-395 is subject to Phosphoserine. The SH3 3 domain maps to 458–519; that stretch reads LPLNVYLALY…PGNYVTPVSR (62 aa). Disordered stretches follow at residues 574-659 and 688-758; these read QHPA…CPRP and PISG…MGPE. Polar residues-rich tracts occupy residues 590-609, 618-633, 643-653, and 690-699; these read AQPTASQAGDTTIPTATHAS, ATVSPLRTQTSPSRLP, ASPQHGQQSPA, and SGLSTPSLIN. Residues 703–716 are compositionally biased toward basic and acidic residues; it reads KPDDKKNEKKEKKS. A compositionally biased stretch (polar residues) spans 741-752; it reads HDPQSAMDTSLQ. Ser-792 bears the Phosphoserine mark. Residues 819–878 enclose the SH3 4 domain; sequence LPRERYRVVVSYPPQSEAEIELKEGDIVFVHKKHEDGWFKGTLQRNGRTGLFPGSFVESF.

This sequence belongs to the SH3RF family. In terms of assembly, interacts (via SH3 domain 3) with PAK2. Interacts with RAC1 (GTP-bound form). In terms of processing, autoubiquitinated.

It catalyses the reaction S-ubiquitinyl-[E2 ubiquitin-conjugating enzyme]-L-cysteine + [acceptor protein]-L-lysine = [E2 ubiquitin-conjugating enzyme]-L-cysteine + N(6)-ubiquitinyl-[acceptor protein]-L-lysine.. It functions in the pathway protein modification; protein ubiquitination. In terms of biological role, has E3 ubiquitin-protein ligase activity. This is E3 ubiquitin-protein ligase SH3RF3 (Sh3rf3) from Mus musculus (Mouse).